We begin with the raw amino-acid sequence, 653 residues long: Macrolide export ATP-binding/permease protein MacB (653 aa).

Positions 6–244 (LALSHICREF…AAASLPADKP (239 aa)) constitute an ABC transporter domain. Position 42–49 (42–49 (GSSGSGKS)) interacts with ATP. Helical transmembrane passes span 277–297 (FLTM…VALG), 526–546 (LAFL…IGVM), 587–607 (LGGI…NLLL), and 617–637 (FSIG…GYFP).

It belongs to the ABC transporter superfamily. Macrolide exporter (TC 3.A.1.122) family. As to quaternary structure, homodimer.

It is found in the cell inner membrane. Non-canonical ABC transporter that contains transmembrane domains (TMD), which form a pore in the inner membrane, and an ATP-binding domain (NBD), which is responsible for energy generation. Confers resistance against macrolides. The polypeptide is Macrolide export ATP-binding/permease protein MacB (Bradyrhizobium diazoefficiens (strain JCM 10833 / BCRC 13528 / IAM 13628 / NBRC 14792 / USDA 110)).